A 106-amino-acid polypeptide reads, in one-letter code: Large ribosomal subunit protein uL24 (106 aa).

This sequence belongs to the universal ribosomal protein uL24 family. In terms of assembly, part of the 50S ribosomal subunit.

Functionally, one of two assembly initiator proteins, it binds directly to the 5'-end of the 23S rRNA, where it nucleates assembly of the 50S subunit. In terms of biological role, one of the proteins that surrounds the polypeptide exit tunnel on the outside of the subunit. The sequence is that of Large ribosomal subunit protein uL24 from Paramagnetospirillum magneticum (strain ATCC 700264 / AMB-1) (Magnetospirillum magneticum).